The chain runs to 520 residues: TnpB-like protein L79 (520 aa).

Over residues 21-47 (GSKTKKKVFVKKKPPDKKPLKKPVKKT) the composition is skewed to basic residues. Residues 21 to 52 (GSKTKKKVFVKKKPPDKKPLKKPVKKTVKTDK) form a disordered region. Residues Cys474, Cys477, Cys491, and Cys494 each contribute to the Zn(2+) site.

The protein in the central section; belongs to the transposase 2 family. It in the C-terminal section; belongs to the transposase 35 family.

The sequence is that of TnpB-like protein L79 from Acanthamoeba polyphaga mimivirus (APMV).